A 190-amino-acid chain; its full sequence is MEALHQKIREEGIVLSDQVLKVDAFLNHQIDPALMQLIGDEFARLFADAGVTKIVTIEASGIAPAVMTGLKLGVPVIFARKHQSLTLTENLLTASVYSFTKQTENTVAISPRHLNSSDRVLVIDDFLANGKASQALISIIKQAGATVAGLGIVIEKSFQGGRAELDSQGYRVESLARVKSLEGGVVSFIE.

Residues L20 and N27 each contribute to the xanthine site. 128-132 (ANGKA) lines the 5-phospho-alpha-D-ribose 1-diphosphate pocket. K156 serves as a coordination point for xanthine.

Belongs to the purine/pyrimidine phosphoribosyltransferase family. Xpt subfamily. In terms of assembly, homodimer.

The protein localises to the cytoplasm. The enzyme catalyses XMP + diphosphate = xanthine + 5-phospho-alpha-D-ribose 1-diphosphate. The protein operates within purine metabolism; XMP biosynthesis via salvage pathway; XMP from xanthine: step 1/1. Functionally, converts the preformed base xanthine, a product of nucleic acid breakdown, to xanthosine 5'-monophosphate (XMP), so it can be reused for RNA or DNA synthesis. This is Xanthine phosphoribosyltransferase from Pseudomonas putida (strain ATCC 700007 / DSM 6899 / JCM 31910 / BCRC 17059 / LMG 24140 / F1).